A 293-amino-acid polypeptide reads, in one-letter code: RNA pseudouridylate synthase domain-containing protein 1 (293 aa).

The active site involves D67.

The protein belongs to the pseudouridine synthase RluA family.

The sequence is that of RNA pseudouridylate synthase domain-containing protein 1 (rpusd1) from Danio rerio (Zebrafish).